An 852-amino-acid polypeptide reads, in one-letter code: Eukaryotic translation initiation factor 3 subunit C (852 aa).

The tract at residues 1–90 (MSRFFVSGYP…DSDSDDEGRK (90 aa)) is disordered. The segment covering 14–57 (SSEEEDLLSSSEEELLSSESEEDNFSSDSEFGNDSDNDSSDSDS) has biased composition (acidic residues). A PCI domain is found at 597-772 (FHMHINLELL…SFVNFTTNDH (176 aa)). Residues 798 to 809 (TASNGYSRKQPM) are compositionally biased toward polar residues. Residues 798–852 (TASNGYSRKQPMQQQQQQQQQQQQQKEQKELLHEENNRFRYANVNANNDEFQTTA) form a disordered region. Low complexity predominate over residues 810–822 (QQQQQQQQQQQQQ). Over residues 823–835 (KEQKELLHEENNR) the composition is skewed to basic and acidic residues. Residues 841–852 (VNANNDEFQTTA) show a composition bias toward polar residues.

This sequence belongs to the eIF-3 subunit C family. In terms of assembly, component of the eukaryotic translation initiation factor 3 (eIF-3) complex.

The protein localises to the cytoplasm. Its function is as follows. Component of the eukaryotic translation initiation factor 3 (eIF-3) complex, which is involved in protein synthesis of a specialized repertoire of mRNAs and, together with other initiation factors, stimulates binding of mRNA and methionyl-tRNAi to the 40S ribosome. The eIF-3 complex specifically targets and initiates translation of a subset of mRNAs involved in cell proliferation. This Debaryomyces hansenii (strain ATCC 36239 / CBS 767 / BCRC 21394 / JCM 1990 / NBRC 0083 / IGC 2968) (Yeast) protein is Eukaryotic translation initiation factor 3 subunit C.